We begin with the raw amino-acid sequence, 224 residues long: uncharacterized protein (224 aa).

The active site involves aspartate 52.

Belongs to the pseudouridine synthase RluA family.

The enzyme catalyses a uridine in RNA = a pseudouridine in RNA. This is an uncharacterized protein from Haemophilus influenzae (strain ATCC 51907 / DSM 11121 / KW20 / Rd).